The chain runs to 171 residues: Translation initiation factor IF-3 (171 aa).

This sequence belongs to the IF-3 family. As to quaternary structure, monomer.

The protein localises to the cytoplasm. Its function is as follows. IF-3 binds to the 30S ribosomal subunit and shifts the equilibrium between 70S ribosomes and their 50S and 30S subunits in favor of the free subunits, thus enhancing the availability of 30S subunits on which protein synthesis initiation begins. The polypeptide is Translation initiation factor IF-3 (Halalkalibacterium halodurans (strain ATCC BAA-125 / DSM 18197 / FERM 7344 / JCM 9153 / C-125) (Bacillus halodurans)).